We begin with the raw amino-acid sequence, 1392 residues long: DNA-directed RNA polymerase subunit beta (1392 aa).

Residues 1372 to 1392 (LSSYAEEDPDEGPEALPEAAE) are disordered.

The protein belongs to the RNA polymerase beta chain family. As to quaternary structure, the RNAP catalytic core consists of 2 alpha, 1 beta, 1 beta' and 1 omega subunit. When a sigma factor is associated with the core the holoenzyme is formed, which can initiate transcription.

It catalyses the reaction RNA(n) + a ribonucleoside 5'-triphosphate = RNA(n+1) + diphosphate. Functionally, DNA-dependent RNA polymerase catalyzes the transcription of DNA into RNA using the four ribonucleoside triphosphates as substrates. This chain is DNA-directed RNA polymerase subunit beta, found in Sphingopyxis alaskensis (strain DSM 13593 / LMG 18877 / RB2256) (Sphingomonas alaskensis).